Consider the following 92-residue polypeptide: UPF0250 protein CGSHiEE_03170 (92 aa).

The protein belongs to the UPF0250 family.

This Haemophilus influenzae (strain PittEE) protein is UPF0250 protein CGSHiEE_03170.